The chain runs to 380 residues: Erythronate-4-phosphate dehydrogenase (380 aa).

Residues serine 45 and threonine 66 each coordinate substrate. A disulfide bond links cysteine 65 and cysteine 90. NAD(+) is bound by residues 126-127 (QV), aspartate 146, threonine 175, 206-208 (ASR), and aspartate 232. Arginine 208 is an active-site residue. Glutamate 237 is an active-site residue. Histidine 254 acts as the Proton donor in catalysis. NAD(+) is bound at residue glycine 257. Tyrosine 258 provides a ligand contact to substrate.

The protein belongs to the D-isomer specific 2-hydroxyacid dehydrogenase family. PdxB subfamily. Homodimer.

It is found in the cytoplasm. It catalyses the reaction 4-phospho-D-erythronate + NAD(+) = (R)-3-hydroxy-2-oxo-4-phosphooxybutanoate + NADH + H(+). Its pathway is cofactor biosynthesis; pyridoxine 5'-phosphate biosynthesis; pyridoxine 5'-phosphate from D-erythrose 4-phosphate: step 2/5. Its function is as follows. Catalyzes the oxidation of erythronate-4-phosphate to 3-hydroxy-2-oxo-4-phosphonooxybutanoate. This chain is Erythronate-4-phosphate dehydrogenase, found in Pseudomonas aeruginosa (strain ATCC 15692 / DSM 22644 / CIP 104116 / JCM 14847 / LMG 12228 / 1C / PRS 101 / PAO1).